We begin with the raw amino-acid sequence, 144 residues long: uncharacterized protein (144 aa).

Transmembrane regions (helical) follow at residues 76–96 (LLSA…VTML) and 105–125 (ILRA…VKSY).

This sequence belongs to the RseC family.

The protein localises to the cell inner membrane. This is an uncharacterized protein from Haemophilus influenzae (strain ATCC 51907 / DSM 11121 / KW20 / Rd).